Reading from the N-terminus, the 1372-residue chain is DNA-directed RNA polymerase subunit beta' (1372 aa).

The Zn(2+) site is built by Cys-69, Cys-71, Cys-84, and Cys-87. 3 residues coordinate Mg(2+): Asp-460, Asp-462, and Asp-464. 4 residues coordinate Zn(2+): Cys-808, Cys-882, Cys-889, and Cys-892.

This sequence belongs to the RNA polymerase beta' chain family. The RNAP catalytic core consists of 2 alpha, 1 beta, 1 beta' and 1 omega subunit. When a sigma factor is associated with the core the holoenzyme is formed, which can initiate transcription. Requires Mg(2+) as cofactor. The cofactor is Zn(2+).

The enzyme catalyses RNA(n) + a ribonucleoside 5'-triphosphate = RNA(n+1) + diphosphate. DNA-dependent RNA polymerase catalyzes the transcription of DNA into RNA using the four ribonucleoside triphosphates as substrates. This chain is DNA-directed RNA polymerase subunit beta', found in Rickettsia akari (strain Hartford).